A 68-amino-acid chain; its full sequence is Protein SlyX homolog (68 aa).

This sequence belongs to the SlyX family.

This is Protein SlyX homolog from Pseudomonas fluorescens (strain ATCC BAA-477 / NRRL B-23932 / Pf-5).